We begin with the raw amino-acid sequence, 429 residues long: Esterase/beta-lactamase LipL (429 aa).

Serine 88 (acyl-ester intermediate) is an active-site residue.

Belongs to the beta-lactamase family.

The protein resides in the secreted. It is found in the cell wall. The protein localises to the cell membrane. The catalysed reaction is a fatty acid ester + H2O = an aliphatic alcohol + a fatty acid + H(+). The enzyme catalyses an acetyl ester + H2O = an aliphatic alcohol + acetate + H(+). It catalyses the reaction a butanoate ester + H2O = an aliphatic alcohol + butanoate + H(+). It carries out the reaction an octanoate ester + H2O = an aliphatic alcohol + octanoate + H(+). The catalysed reaction is decanoate ester + H2O = decanoate + an aliphatic alcohol + H(+). The enzyme catalyses a dodecanoate ester + H2O = an aliphatic alcohol + dodecanoate + H(+). It catalyses the reaction a tetradecanoate ester + H2O = an aliphatic alcohol + tetradecanoate + H(+). It carries out the reaction hexadecanoate ester + H2O = an aliphatic alcohol + hexadecanoate + H(+). The catalysed reaction is octadecanoate ester + H2O = an aliphatic alcohol + octadecanoate + H(+). The enzyme catalyses a hexanoate ester + H2O = an aliphatic alcohol + hexanoate + H(+). It catalyses the reaction a beta-lactam + H2O = a substituted beta-amino acid. Esterase and beta-lactamase activities are inhibited by the active site residue modifiers phenylmethanesulfonylflouride (PMSF) and diethylpyrocarbonate (DEPC). Shows both esterase and beta-lactamase activities, with a much higher activity against phenyl esters than against beta-lactams. Shows esterase activity against both long-chain and short-chain p-nitrophenol (pNP) esters, with a preference for shorter chain esters. Hydrolyzes substrates containing beta-lactam ring such as nitrocefin and ampicillin. Functions as an immunogen that activates both humoral and cell-mediated responses. The chain is Esterase/beta-lactamase LipL from Mycobacterium tuberculosis (strain ATCC 25618 / H37Rv).